Here is a 347-residue protein sequence, read N- to C-terminus: NADH-ubiquinone oxidoreductase chain 2 (347 aa).

A run of 11 helical transmembrane segments spans residues 1 to 21, 25 to 45, 55 to 75, 96 to 116, 123 to 143, 145 to 165, 178 to 198, 199 to 219, 237 to 257, 274 to 294, and 324 to 344; these read MNPLAQPIIYSTIFAGTLITA, HWFLAWVGLEMNMLAFIPVLT, AAIKYFLVQATASMILMMAIL, LMILTALAMKLGMAPFHFWVP, TLTSGLLLLTWQKLAPISIMY, IFPVMNVNILLTFSILSIMVG, ILAYSSITHVGWMTAVLPYNP, NITIFNLTIYIVLTTTAFLAL, LTWLLPLIPSTLLSLGGLPPL, GTLIIPTIMAIVTLINLYFYM, and LLLPTLTILTTLLLPIAPLTF.

It belongs to the complex I subunit 2 family. As to quaternary structure, core subunit of respiratory chain NADH dehydrogenase (Complex I) which is composed of 45 different subunits. Interacts with TMEM242.

The protein localises to the mitochondrion inner membrane. The catalysed reaction is a ubiquinone + NADH + 5 H(+)(in) = a ubiquinol + NAD(+) + 4 H(+)(out). Core subunit of the mitochondrial membrane respiratory chain NADH dehydrogenase (Complex I) which catalyzes electron transfer from NADH through the respiratory chain, using ubiquinone as an electron acceptor. Essential for the catalytic activity and assembly of complex I. The protein is NADH-ubiquinone oxidoreductase chain 2 of Symphalangus syndactylus (Siamang).